Reading from the N-terminus, the 283-residue chain is MTDSNNWYIEHFERTGSAIGYRITGKLDEVQSPFQKIEIFQTTDWGNLMTIDGAIMLTSKDNFFYHEMISHPVLFTHAAPKRVVIIGGGDCGTLREVLKHTGVESVTQCDIDEQVTVMARKHFPELCDSNDDARAELLFDDGVAYMANCPAGSVDVVIVDSTDPVGPGEGLFNKAFYESCFKALKDDGILVQQSESPLMQLELINEMRAEMGKAGFGSFKTLPFPQPCYPTGWWSVTMARKGDSSFDFRQADSAAKTFNTLYYTAALHTGVLVTPPFVQAALK.

One can recognise a PABS domain in the interval 5–241; that stretch reads NNWYIEHFER…GWWSVTMARK (237 aa). Position 35 (Q35) interacts with S-methyl-5'-thioadenosine. Spermidine contacts are provided by H66 and D90. Residues D110 and 141 to 142 contribute to the S-methyl-5'-thioadenosine site; that span reads DG. D160 (proton acceptor) is an active-site residue. 160–163 serves as a coordination point for spermidine; that stretch reads DSTD. Position 167 (P167) interacts with S-methyl-5'-thioadenosine.

The protein belongs to the spermidine/spermine synthase family. Homodimer or homotetramer.

Its subcellular location is the cytoplasm. It catalyses the reaction S-adenosyl 3-(methylsulfanyl)propylamine + putrescine = S-methyl-5'-thioadenosine + spermidine + H(+). The protein operates within amine and polyamine biosynthesis; spermidine biosynthesis; spermidine from putrescine: step 1/1. Functionally, catalyzes the irreversible transfer of a propylamine group from the amino donor S-adenosylmethioninamine (decarboxy-AdoMet) to putrescine (1,4-diaminobutane) to yield spermidine. The chain is Polyamine aminopropyltransferase from Stenotrophomonas maltophilia (strain K279a).